The sequence spans 210 residues: HTH-type transcriptional repressor ComR (210 aa).

Residues 18–78 (VFDRDAALDK…AVLDRYIDRF (61 aa)) form the HTH tetR-type domain. Positions 41 to 60 (SLADLVEATGAKAPTLYAEF) form a DNA-binding region, H-T-H motif.

Binding to the promoter region of BhsA/ComC is released in the presence of copper. Its function is as follows. Represses expression of BhsA/ComC by binding to its promoter region in the absence of copper. The protein is HTH-type transcriptional repressor ComR (comR) of Escherichia coli (strain K12).